We begin with the raw amino-acid sequence, 423 residues long: Putative competence-damage inducible protein (423 aa).

It belongs to the CinA family.

This chain is Putative competence-damage inducible protein, found in Streptococcus equi subsp. equi (strain 4047).